Reading from the N-terminus, the 312-residue chain is MRSPASTPSIRGGAFASSPILRHNHLPFLRLNPPSSSPTRSSPPSIQCSVQFRPCIDIHKGKVKQIVGSTLKDLKDDDGSDPITNFESDKSAAEYATLYKQDGLKGGHVIMLGADPFSKAASLEALHAYPGGLQVGGGINSDNCLSYIEEGASHVIVTSYVFNNGQMDLERLKDLVRIVGKERLVLDLSCRKKEGKYAIVTDRWQKFSDVSLDAKVMEFLANFADEFLVHGVDVEGKKLGIDEELVALLGKHSPIPVTYAGGVTVMDDLERIRTAGMDNVDVTVGSALDIFGGNLAYKDVVAWHNQQKVSVA.

The transit peptide at 1–67 (MRSPASTPSI…IHKGKVKQIV (67 aa)) directs the protein to the chloroplast. Aspartate 57 contacts 1-(5-phospho-beta-D-ribosyl)-5-[(5-phospho-beta-D-ribosylamino)methylideneamino]imidazole-4-carboxamide. Glutamine 65 is a binding site for 5-[(5-phospho-1-deoxy-D-ribulos-1-ylimino)methylamino]-1-(5-phospho-beta-D-ribosyl)imidazole-4-carboxamide. Na(+) is bound by residues glutamine 65 and isoleucine 66. Glycine 68 lines the 1-(5-phospho-beta-D-ribosyl)-5-[(5-phospho-beta-D-ribosylamino)methylideneamino]imidazole-4-carboxamide pocket. Positions 108, 138, 158, and 159 each coordinate 5-[(5-phospho-1-deoxy-D-ribulos-1-ylimino)methylamino]-1-(5-phospho-beta-D-ribosyl)imidazole-4-carboxamide. Positions 138, 158, and 159 each coordinate 1-(5-phospho-beta-D-ribosyl)-5-[(5-phospho-beta-D-ribosylamino)methylideneamino]imidazole-4-carboxamide. Positions 159 and 162 each coordinate Na(+). 1-(5-phospho-beta-D-ribosyl)-5-[(5-phospho-beta-D-ribosylamino)methylideneamino]imidazole-4-carboxamide contacts are provided by aspartate 187, arginine 203, tryptophan 204, and histidine 230. Position 187 (aspartate 187) interacts with 5-[(5-phospho-1-deoxy-D-ribulos-1-ylimino)methylamino]-1-(5-phospho-beta-D-ribosyl)imidazole-4-carboxamide. Tryptophan 204 provides a ligand contact to 5-[(5-phospho-1-deoxy-D-ribulos-1-ylimino)methylamino]-1-(5-phospho-beta-D-ribosyl)imidazole-4-carboxamide. Position 235 (glutamate 235) interacts with Na(+). 1-(5-phospho-beta-D-ribosyl)-5-[(5-phospho-beta-D-ribosylamino)methylideneamino]imidazole-4-carboxamide contacts are provided by glycine 236, glycine 262, glycine 285, and serine 286. Residues glycine 236, glycine 262, glycine 285, and serine 286 each coordinate 5-[(5-phospho-1-deoxy-D-ribulos-1-ylimino)methylamino]-1-(5-phospho-beta-D-ribosyl)imidazole-4-carboxamide.

This sequence belongs to the HisA/HisF family. It depends on Na(+) as a cofactor.

It is found in the plastid. Its subcellular location is the chloroplast. The catalysed reaction is 1-(5-phospho-beta-D-ribosyl)-5-[(5-phospho-beta-D-ribosylamino)methylideneamino]imidazole-4-carboxamide = 5-[(5-phospho-1-deoxy-D-ribulos-1-ylimino)methylamino]-1-(5-phospho-beta-D-ribosyl)imidazole-4-carboxamide. It participates in amino-acid biosynthesis; L-histidine biosynthesis; L-histidine from 5-phospho-alpha-D-ribose 1-diphosphate: step 4/9. In terms of biological role, component of the histidine biosynthesis pathway that catalyzes the isomerization of 5'-ProFAR (pro-phosphoribosyl formimino-5-aminoimidazole-4-carboxamide ribonucleotide, referred as 1-(5-phospho-beta-D-ribosyl)-5-[(5-phospho-beta-D-ribosylamino)methylideneamino]imidazole-4-carboxamide) to PrFAR (phosphoribulosyl formimino-5-aminoimidazole-4-carboxamide ribonucleotide, referred as 5-[(5-phospho-1-deoxy-D-ribulos-1-ylimino)methylamino]-1-(5-phospho-beta-D-ribosyl)imidazole-4-carboxamide). This Medicago truncatula (Barrel medic) protein is 1-(5-phosphoribosyl)-5-[(5-phosphoribosylamino)methylideneamino] imidazole-4-carboxamide isomerase HISN3, chloroplastic.